We begin with the raw amino-acid sequence, 51 residues long: Sperm protamine P1 (51 aa).

The protein belongs to the protamine P1 family. In terms of tissue distribution, testis.

The protein localises to the nucleus. Its subcellular location is the chromosome. Functionally, protamines substitute for histones in the chromatin of sperm during the haploid phase of spermatogenesis. They compact sperm DNA into a highly condensed, stable and inactive complex. The polypeptide is Sperm protamine P1 (PRM1) (Macaca mulatta (Rhesus macaque)).